The following is a 434-amino-acid chain: D-amino acid dehydrogenase (434 aa).

FAD is bound at residue 3–17 (VLVLGSGVIGTASAY).

Belongs to the DadA oxidoreductase family. FAD serves as cofactor.

It carries out the reaction a D-alpha-amino acid + A + H2O = a 2-oxocarboxylate + AH2 + NH4(+). It functions in the pathway amino-acid degradation; D-alanine degradation; NH(3) and pyruvate from D-alanine: step 1/1. Oxidative deamination of D-amino acids. The polypeptide is D-amino acid dehydrogenase (Pseudomonas entomophila (strain L48)).